Here is a 470-residue protein sequence, read N- to C-terminus: UDP-N-acetylmuramate--L-alanine ligase (470 aa).

118-124 lines the ATP pocket; sequence GTHGKTT.

Belongs to the MurCDEF family.

Its subcellular location is the cytoplasm. It catalyses the reaction UDP-N-acetyl-alpha-D-muramate + L-alanine + ATP = UDP-N-acetyl-alpha-D-muramoyl-L-alanine + ADP + phosphate + H(+). It participates in cell wall biogenesis; peptidoglycan biosynthesis. Cell wall formation. The chain is UDP-N-acetylmuramate--L-alanine ligase from Cereibacter sphaeroides (strain ATCC 17029 / ATH 2.4.9) (Rhodobacter sphaeroides).